The chain runs to 229 residues: ATP-dependent dethiobiotin synthetase BioD (229 aa).

15 to 20 (EIGKTL) is an ATP binding site. Thr19 is a Mg(2+) binding site. Lys40 is a catalytic residue. Residues Asp57, 118–121 (EGVG), and 207–209 (PRL) each bind ATP. The Mg(2+) site is built by Asp57 and Glu118.

This sequence belongs to the dethiobiotin synthetase family. Homodimer. The cofactor is Mg(2+).

Its subcellular location is the cytoplasm. It carries out the reaction (7R,8S)-7,8-diammoniononanoate + CO2 + ATP = (4R,5S)-dethiobiotin + ADP + phosphate + 3 H(+). It functions in the pathway cofactor biosynthesis; biotin biosynthesis; biotin from 7,8-diaminononanoate: step 1/2. In terms of biological role, catalyzes a mechanistically unusual reaction, the ATP-dependent insertion of CO2 between the N7 and N8 nitrogen atoms of 7,8-diaminopelargonic acid (DAPA, also called 7,8-diammoniononanoate) to form a ureido ring. This Ralstonia nicotianae (strain ATCC BAA-1114 / GMI1000) (Ralstonia solanacearum) protein is ATP-dependent dethiobiotin synthetase BioD.